We begin with the raw amino-acid sequence, 328 residues long: Ferredoxin--NADP reductase (328 aa).

FAD-binding residues include Ser-14, Glu-33, Gln-41, Tyr-46, Ile-90, and Phe-126.

It belongs to the ferredoxin--NADP reductase type 2 family. Homodimer. The cofactor is FAD.

It carries out the reaction 2 reduced [2Fe-2S]-[ferredoxin] + NADP(+) + H(+) = 2 oxidized [2Fe-2S]-[ferredoxin] + NADPH. This is Ferredoxin--NADP reductase from Mycoplasmoides gallisepticum (strain R(low / passage 15 / clone 2)) (Mycoplasma gallisepticum).